The following is a 148-amino-acid chain: D-aminoacyl-tRNA deacylase (148 aa).

A Gly-cisPro motif, important for rejection of L-amino acids motif is present at residues 137-138 (GP).

This sequence belongs to the DTD family. Homodimer.

It localises to the cytoplasm. The enzyme catalyses glycyl-tRNA(Ala) + H2O = tRNA(Ala) + glycine + H(+). It catalyses the reaction a D-aminoacyl-tRNA + H2O = a tRNA + a D-alpha-amino acid + H(+). In terms of biological role, an aminoacyl-tRNA editing enzyme that deacylates mischarged D-aminoacyl-tRNAs. Also deacylates mischarged glycyl-tRNA(Ala), protecting cells against glycine mischarging by AlaRS. Acts via tRNA-based rather than protein-based catalysis; rejects L-amino acids rather than detecting D-amino acids in the active site. By recycling D-aminoacyl-tRNA to D-amino acids and free tRNA molecules, this enzyme counteracts the toxicity associated with the formation of D-aminoacyl-tRNA entities in vivo and helps enforce protein L-homochirality. The protein is D-aminoacyl-tRNA deacylase of Aquifex aeolicus (strain VF5).